The sequence spans 404 residues: Putative transporter AmpG 2 (404 aa).

12 consecutive transmembrane segments (helical) span residues 11–31, 49–69, 84–104, 109–129, 154–174, 177–197, 224–244, 261–281, 294–311, 315–337, 353–373, and 378–398; these read IYNILFILFISLPGGLIYLLT, IGLFSLVNFIHIFKFLWGPLL, YCLIFSLLSCICCVYILTGFN, FISFSLCLIILAFFSSIYDML, FRIGILISGSGALYLSTIISW, VYRTMAILCVPSLLLIIFYPL, WLIIVGFMLLYRLQDNFLAVM, LGYKAFGMCATIAGGFIGGFL, VLVYHALSSITFLLLYSY, ITTLYIAVFLQEFTKGLTMSPFF, IALITSIAYISTVLFGSISGY, and LGWGYFFAIASFCFIPAYILI.

The protein belongs to the major facilitator superfamily.

The protein localises to the cell inner membrane. In Rickettsia bellii (strain RML369-C), this protein is Putative transporter AmpG 2 (ampG2).